A 367-amino-acid chain; its full sequence is MKTSPHRNTSAIVDLKAIRNNIEKFKKHIHPNAEIWPAVKADAYGHGSVEVSKAVSDLVGGFCVSNLDEAIELRNHLVTKPILVLSGIVPEDVDIAAALNISLTAPSLEWLKLVVQEEAELSDLKIHIGVDSGMGRIGIRDVEEANQMIELADKYAINFEGIFTHFATADMADDTKFKDQQARFNKIMAGLSRKPKFVHSTNTAAALWHKEQVQAIERLGISMYGLNPSGKTLELPFEIEPALSLVSELTHIKKIAAGETVGYGATYETSEETWIGTVPIGYADGWTRQMQGFKVLVNGEFCEIVGRVCMDQMMIKLDKSYPLGTKVTLIGRDKTNEITTTDVADWRGTINYEVLCLLSDRIKRIYK.

The Proton acceptor; specific for D-alanine role is filled by lysine 40. An N6-(pyridoxal phosphate)lysine modification is found at lysine 40. Arginine 136 is a substrate binding site. Tyrosine 263 serves as the catalytic Proton acceptor; specific for L-alanine. A substrate-binding site is contributed by methionine 310.

This sequence belongs to the alanine racemase family. It depends on pyridoxal 5'-phosphate as a cofactor.

The enzyme catalyses L-alanine = D-alanine. The protein operates within amino-acid biosynthesis; D-alanine biosynthesis; D-alanine from L-alanine: step 1/1. Functionally, catalyzes the interconversion of L-alanine and D-alanine. May also act on other amino acids. The sequence is that of Alanine racemase (alr) from Lactococcus lactis subsp. lactis (strain IL1403) (Streptococcus lactis).